The following is a 323-amino-acid chain: Arginase (323 aa).

Residues His119, Asp142, His144, and Asp146 each contribute to the Mn(2+) site. Residues 144–148 (HADIN), 155–157 (SKN), and Asp198 contribute to the substrate site. Mn(2+)-binding residues include Asp247 and Asp249. The substrate site is built by Thr261 and Glu292.

It belongs to the arginase family. In terms of assembly, homotrimer. It depends on Mn(2+) as a cofactor.

It carries out the reaction L-arginine + H2O = urea + L-ornithine. Its pathway is nitrogen metabolism; urea cycle; L-ornithine and urea from L-arginine: step 1/1. This is Arginase (car1) from Schizosaccharomyces pombe (strain 972 / ATCC 24843) (Fission yeast).